The primary structure comprises 124 residues: Sulfiredoxin (124 aa).

The protein belongs to the sulfiredoxin family. Interacts with tpx1 in response to oxidative stress.

It is found in the cytoplasm. Its subcellular location is the nucleus. The catalysed reaction is S-hydroxy-S-oxy-L-cysteinyl-[peroxiredoxin] + [protein]-dithiol + ATP = S-hydroxy-L-cysteinyl-[peroxiredoxin] + [protein]-disulfide + ADP + phosphate. Functionally, contributes to oxidative stress resistance by reducing cysteine-sulfinic acid formed under exposure to oxidants in a peroxiredoxin. May catalyze the reduction in a multi-step process by acting both as a specific phosphotransferase and a thioltransferase. This Schizosaccharomyces pombe (strain 972 / ATCC 24843) (Fission yeast) protein is Sulfiredoxin (srx1).